The sequence spans 65 residues: Kappa-scoloptoxin(04)-Ssd1a (65 aa).

A signal peptide spans 1 to 24 (MKKTCVVSVFLVLLLLKFHDLSMG). The propeptide occupies 25–36 (EEISPLKKVAPR). 2 cysteine pairs are disulfide-bonded: Cys-42-Cys-53 and Cys-47-Cys-60.

Expressed by the venom gland.

The protein resides in the secreted. In terms of biological role, voltage-gated potassium channel inhibitor. The chain is Kappa-scoloptoxin(04)-Ssd1a from Scolopendra dehaani (Thai centipede).